Reading from the N-terminus, the 237-residue chain is ATP synthase subunit a (237 aa).

A run of 5 helical transmembrane segments spans residues L18–A38, S77–A97, N114–I134, L167–T187, and A208–G230.

Belongs to the ATPase A chain family. As to quaternary structure, F-type ATPases have 2 components, CF(1) - the catalytic core - and CF(0) - the membrane proton channel. CF(1) has five subunits: alpha(3), beta(3), gamma(1), delta(1), epsilon(1). CF(0) has three main subunits: a(1), b(2) and c(9-12). The alpha and beta chains form an alternating ring which encloses part of the gamma chain. CF(1) is attached to CF(0) by a central stalk formed by the gamma and epsilon chains, while a peripheral stalk is formed by the delta and b chains.

It localises to the cell membrane. Its function is as follows. Key component of the proton channel; it plays a direct role in the translocation of protons across the membrane. In Streptococcus gordonii (strain Challis / ATCC 35105 / BCRC 15272 / CH1 / DL1 / V288), this protein is ATP synthase subunit a.